Reading from the N-terminus, the 267-residue chain is Myb-related protein Hv1 (267 aa).

HTH myb-type domains are found at residues 9–61 (KAHT…INYL) and 62–116 (RPDL…RRKL). DNA-binding regions (H-T-H motif) lie at residues 37–61 (WRSL…INYL) and 89–112 (WSLI…NTHI).

Germinating seed and apical meristem of shoot and root.

Its subcellular location is the nucleus. Functionally, possible transcription activator in response to an external signal. May be involved in the regulation of flavonoid biosynthesis. This chain is Myb-related protein Hv1 (MYB1), found in Hordeum vulgare (Barley).